A 213-amino-acid polypeptide reads, in one-letter code: Endoplasmic reticulum vesicle protein 25 (213 aa).

The first 20 residues, 1-20 (MILRIPSLLYLFTLLTAVYA), serve as a signal peptide directing secretion. Residues 21-181 (VKFDLTSDRN…TNESTNQRVK (161 aa)) lie on the Lumenal side of the membrane. In terms of domain architecture, GOLD spans 33–122 (PKCIWNFASA…VRSVELDVDI (90 aa)). The helical transmembrane segment at 182-202 (VFSVLIICCTIGLGVWQLLHL) threads the bilayer. Residues 203–213 (RSFFKRKYLID) are Cytoplasmic-facing.

It belongs to the EMP24/GP25L family.

It is found in the endoplasmic reticulum membrane. Its subcellular location is the golgi apparatus membrane. Its function is as follows. Constituent of COPII-coated endoplasmic reticulum-derived transport vesicles. Required for efficient transport of a subset of secretory proteins to the Golgi. Facilitates retrograde transport from the Golgi to the endoplasmic reticulum. The sequence is that of Endoplasmic reticulum vesicle protein 25 (ERV25) from Cryptococcus neoformans var. neoformans serotype D (strain JEC21 / ATCC MYA-565) (Filobasidiella neoformans).